Reading from the N-terminus, the 586-residue chain is Potassium-transporting ATPase potassium-binding subunit (586 aa).

The next 12 helical transmembrane spans lie at 11–31 (LFLV…AKVF), 67–87 (AVAV…ILML), 136–156 (GLAV…IAVI), 179–199 (LYVL…QGVI), 279–299 (VEIF…GVMV), 306–326 (WAIL…LQGV), 351–371 (FGLA…CGAV), 381–401 (LGGM…GGVG), 403–423 (GLYT…LMIG), 442–462 (IITV…AMIT), 507–527 (ILGS…VLAM), and 551–571 (FALW…FPAL).

This sequence belongs to the KdpA family. As to quaternary structure, the system is composed of three essential subunits: KdpA, KdpB and KdpC.

It is found in the cell inner membrane. Part of the high-affinity ATP-driven potassium transport (or Kdp) system, which catalyzes the hydrolysis of ATP coupled with the electrogenic transport of potassium into the cytoplasm. This subunit binds the periplasmic potassium ions and delivers the ions to the membrane domain of KdpB through an intramembrane tunnel. In Geobacter metallireducens (strain ATCC 53774 / DSM 7210 / GS-15), this protein is Potassium-transporting ATPase potassium-binding subunit.